Reading from the N-terminus, the 215-residue chain is 3-demethoxyubiquinol 3-hydroxylase (215 aa).

6 residues coordinate Fe cation: E64, E94, H97, E146, E178, and H181.

The protein belongs to the COQ7 family. Fe cation is required as a cofactor.

It is found in the cell membrane. The enzyme catalyses a 5-methoxy-2-methyl-3-(all-trans-polyprenyl)benzene-1,4-diol + AH2 + O2 = a 3-demethylubiquinol + A + H2O. The protein operates within cofactor biosynthesis; ubiquinone biosynthesis. Functionally, catalyzes the hydroxylation of 2-nonaprenyl-3-methyl-6-methoxy-1,4-benzoquinol during ubiquinone biosynthesis. The protein is 3-demethoxyubiquinol 3-hydroxylase of Ectopseudomonas mendocina (strain ymp) (Pseudomonas mendocina).